The primary structure comprises 414 residues: Apolipoprotein N-acyltransferase (414 aa).

The next 6 membrane-spanning stretches (helical) occupy residues 19-39 (GIALFGAILFSLFIYLHHFGI), 40-60 (TSPLLYSLLALLALAFYLKLP), 63-83 (SGFAFGFWVGIAWFYWMALSF), 91-111 (LIPFILLGIGGVYGVLFSMAL), 121-141 (LLLWLLSHVQPFGFDWMVPEV), and 153-173 (LSFGLILLSLSLFWLLPQRWL). In terms of domain architecture, CN hydrolase spans 202-414 (IETHIPQEIR…NRSPSGIIAP (213 aa)). Catalysis depends on Glu-243, which acts as the Proton acceptor. The active site involves Lys-298. Cys-351 acts as the Nucleophile in catalysis.

The protein belongs to the CN hydrolase family. Apolipoprotein N-acyltransferase subfamily.

The protein localises to the cell inner membrane. It catalyses the reaction N-terminal S-1,2-diacyl-sn-glyceryl-L-cysteinyl-[lipoprotein] + a glycerophospholipid = N-acyl-S-1,2-diacyl-sn-glyceryl-L-cysteinyl-[lipoprotein] + a 2-acyl-sn-glycero-3-phospholipid + H(+). It functions in the pathway protein modification; lipoprotein biosynthesis (N-acyl transfer). Catalyzes the phospholipid dependent N-acylation of the N-terminal cysteine of apolipoprotein, the last step in lipoprotein maturation. The polypeptide is Apolipoprotein N-acyltransferase (Wolinella succinogenes (strain ATCC 29543 / DSM 1740 / CCUG 13145 / JCM 31913 / LMG 7466 / NCTC 11488 / FDC 602W) (Vibrio succinogenes)).